A 106-amino-acid polypeptide reads, in one-letter code: UPF0145 protein CPF_0876 (106 aa).

This sequence belongs to the UPF0145 family.

This chain is UPF0145 protein CPF_0876, found in Clostridium perfringens (strain ATCC 13124 / DSM 756 / JCM 1290 / NCIMB 6125 / NCTC 8237 / Type A).